A 283-amino-acid chain; its full sequence is Elongation factor Ts (283 aa).

Residues 79 to 82 (TDFV) form an involved in Mg(2+) ion dislocation from EF-Tu region.

The protein belongs to the EF-Ts family.

The protein localises to the cytoplasm. Its function is as follows. Associates with the EF-Tu.GDP complex and induces the exchange of GDP to GTP. It remains bound to the aminoacyl-tRNA.EF-Tu.GTP complex up to the GTP hydrolysis stage on the ribosome. This Pseudoalteromonas translucida (strain TAC 125) protein is Elongation factor Ts.